We begin with the raw amino-acid sequence, 730 residues long: ATP-dependent DNA helicase Hel308 (730 aa).

Residues Q28 and 46–53 (IPTASGKT) each bind ATP. The 167-residue stretch at 33–199 (EKGLLEGKNL…WLDAELVLSE (167 aa)) folds into the Helicase ATP-binding domain. Positions 144–147 (DEVH) match the DEAH box motif. One can recognise a Helicase C-terminal domain in the interval 232–433 (AVNLVLDTIK…ALRTHILSTI (202 aa)).

This sequence belongs to the helicase family. Hel308 subfamily. As to quaternary structure, monomer.

It carries out the reaction Couples ATP hydrolysis with the unwinding of duplex DNA by translocating in the 3'-5' direction.. The catalysed reaction is ATP + H2O = ADP + phosphate + H(+). DNA-dependent ATPase and 3'-5' DNA helicase that may be involved in repair of stalled replication forks. The chain is ATP-dependent DNA helicase Hel308 from Methanosarcina mazei (strain ATCC BAA-159 / DSM 3647 / Goe1 / Go1 / JCM 11833 / OCM 88) (Methanosarcina frisia).